We begin with the raw amino-acid sequence, 292 residues long: MSHRHTAYVGRFAPSPTGPLHFGSLITAIASYCDAKVHQGKWLVRIEDTDIPRIYPGSEAHILACIDAFGFQPDGEILFQRDRLDLYENVLEQLKAQNLVYACQCTRKMLGSNAIYSGTCRNLNLPFQNQAIRVKVKDQLICFDDRLQGIQCSNLAHDLGDFVLKRRDGIINYQLAVVVDDYMQGMTHVVRGADLLDNTQRQIWLGDLLGYPRLHYLHLPLAMNAQGQKLSKQNMAAALDLSKASQYIQQSLAALHQPAVDLDTPDRMLKQAVAQWQLNHIPHQTRLAGTYL.

L-glutamate-binding positions include arginine 11–serine 15 and glutamate 47. Positions proline 14–serine 24 match the 'HIGH' region motif. Residues cysteine 103, cysteine 105, tyrosine 116, and cysteine 120 each coordinate Zn(2+). The L-glutamate site is built by tyrosine 173 and arginine 191. The short motif at lysine 229–glutamine 233 is the 'KMSKS' region element. Residue lysine 232 participates in ATP binding.

The protein belongs to the class-I aminoacyl-tRNA synthetase family. GluQ subfamily. The cofactor is Zn(2+).

In terms of biological role, catalyzes the tRNA-independent activation of glutamate in presence of ATP and the subsequent transfer of glutamate onto a tRNA(Asp). Glutamate is transferred on the 2-amino-5-(4,5-dihydroxy-2-cyclopenten-1-yl) moiety of the queuosine in the wobble position of the QUC anticodon. In Acinetobacter baylyi (strain ATCC 33305 / BD413 / ADP1), this protein is Glutamyl-Q tRNA(Asp) synthetase.